An 883-amino-acid polypeptide reads, in one-letter code: 3-hydroxy-3-methylglutaryl-coenzyme A reductase (883 aa).

At 1–9 the chain is on the cytoplasmic side; sequence MLSRLFRMH. Residues 10 to 39 traverse the membrane as a helical segment; it reads GQFVASHPWEVIVGTVTLTICMMSMNMFTG. The Lumenal portion of the chain corresponds to 40–56; that stretch reads NDKICGWNYACPKFEED. The helical transmembrane segment at 57 to 78 threads the bilayer; it reads VLSSDIIILTITRCIAILYIYF. Over 79–89 the chain is Cytoplasmic; it reads QFQNLRQLGSK. The helical transmembrane segment at 90-114 threads the bilayer; it reads YILGIAGLFTIFSSFVFSTVVIHFL. Over 115–123 the chain is Lumenal; it reads DKELTGLNE. The chain crosses the membrane as a helical span at residues 124–149; the sequence is ALPFFLLLIDLSKASALAKFALSSNS. The Cytoplasmic portion of the chain corresponds to 150-159; the sequence is QDEVRDNIAR. A helical transmembrane segment spans residues 160-187; that stretch reads GMAILGPTFTLEALVECLVIGVGTMSGV. At 188-191 the chain is on the lumenal side; sequence RQLE. Residues 192–220 form a helical membrane-spanning segment; sequence IMCCFGCMSVLANYFAFMTFFPACVSLVL. Residues 221 to 249 are Cytoplasmic-facing; it reads ELSRESREGRPIWQLSQFASVLEEEEDNK. The chain crosses the membrane as a helical span at residues 250 to 276; it reads PNPVTQRVKMIMSLGLVLVHAHSRWIS. The Lumenal portion of the chain corresponds to 277–316; sequence EPSSQNSTSISDHEVTTMLDDMMPKRVEPSMPLWQFYLSR. Residue Asn-282 is glycosylated (N-linked (GlcNAc...) asparagine). The helical transmembrane segment at 317–341 threads the bilayer; the sequence is MVTMDVEQIITLGLALLLAVKYIFF. At 342-883 the chain is on the cytoplasmic side; it reads EQTETESTFS…LPGTCTKKAA (542 aa). Residues 373–396 are disordered; it reads REPEQEKTVHVSTTEEASSKEETE. Catalysis depends on charge relay system residues Glu-554, Lys-686, and Asp-762. Residue His-861 is the Proton donor of the active site.

This sequence belongs to the HMG-CoA reductase family. Homotetramer. Homodimer.

The protein localises to the endoplasmic reticulum membrane. Its subcellular location is the peroxisome membrane. The catalysed reaction is (R)-mevalonate + 2 NADP(+) + CoA = (3S)-3-hydroxy-3-methylglutaryl-CoA + 2 NADPH + 2 H(+). Its pathway is metabolic intermediate biosynthesis; (R)-mevalonate biosynthesis; (R)-mevalonate from acetyl-CoA: step 3/3. Catalyzes the conversion of (3S)-hydroxy-3-methylglutaryl-CoA (HMG-CoA) to mevalonic acid, the rate-limiting step in the synthesis of cholesterol and other isoprenoids, thus plays a critical role in cellular cholesterol homeostasis. The sequence is that of 3-hydroxy-3-methylglutaryl-coenzyme A reductase (hmgcr) from Xenopus laevis (African clawed frog).